A 254-amino-acid chain; its full sequence is tRNA (guanine-N(1)-)-methyltransferase (254 aa).

S-adenosyl-L-methionine is bound by residues Gly119 and 139–144 (IGDFVL).

This sequence belongs to the RNA methyltransferase TrmD family. Homodimer.

The protein resides in the cytoplasm. The catalysed reaction is guanosine(37) in tRNA + S-adenosyl-L-methionine = N(1)-methylguanosine(37) in tRNA + S-adenosyl-L-homocysteine + H(+). Its function is as follows. Specifically methylates guanosine-37 in various tRNAs. The polypeptide is tRNA (guanine-N(1)-)-methyltransferase (Dechloromonas aromatica (strain RCB)).